The sequence spans 61 residues: Small ribosomal subunit protein uS14 (61 aa).

Zn(2+) is bound by residues cysteine 24, cysteine 27, cysteine 40, and cysteine 43.

Belongs to the universal ribosomal protein uS14 family. Zinc-binding uS14 subfamily. In terms of assembly, part of the 30S ribosomal subunit. Contacts proteins S3 and S10. Zn(2+) serves as cofactor.

Its function is as follows. Binds 16S rRNA, required for the assembly of 30S particles and may also be responsible for determining the conformation of the 16S rRNA at the A site. This is Small ribosomal subunit protein uS14 from Bifidobacterium adolescentis (strain ATCC 15703 / DSM 20083 / NCTC 11814 / E194a).